A 107-amino-acid polypeptide reads, in one-letter code: Death-associated protein-like 1 (107 aa).

A disordered region spans residues 1–23 (MANEVQDLLSPRKGGHPPAVKAG).

As to expression, expressed in hair follicle (at protein level).

Its function is as follows. May play a role in the early stages of epithelial differentiation or in apoptosis. This chain is Death-associated protein-like 1 (DAPL1), found in Homo sapiens (Human).